A 150-amino-acid chain; its full sequence is MRAVCQRAQSASVTVDGKVVGSFEGEGLVILLGVSVTDTEAEAVQVARKVAGLRMLDGERSLTDAGAPALVVSQFTLYGDVRKGRRPSWTRAAKGDQAEPLYERFTAELEAAGVRVERGVFGAMMDVSLTNSGPFTLIVDSDELAGPRRG.

The Gly-cisPro motif, important for rejection of L-amino acids motif lies at 133-134 (GP).

It belongs to the DTD family. As to quaternary structure, homodimer.

Its subcellular location is the cytoplasm. It catalyses the reaction glycyl-tRNA(Ala) + H2O = tRNA(Ala) + glycine + H(+). It carries out the reaction a D-aminoacyl-tRNA + H2O = a tRNA + a D-alpha-amino acid + H(+). In terms of biological role, an aminoacyl-tRNA editing enzyme that deacylates mischarged D-aminoacyl-tRNAs. Also deacylates mischarged glycyl-tRNA(Ala), protecting cells against glycine mischarging by AlaRS. Acts via tRNA-based rather than protein-based catalysis; rejects L-amino acids rather than detecting D-amino acids in the active site. By recycling D-aminoacyl-tRNA to D-amino acids and free tRNA molecules, this enzyme counteracts the toxicity associated with the formation of D-aminoacyl-tRNA entities in vivo and helps enforce protein L-homochirality. In Micrococcus luteus (strain ATCC 4698 / DSM 20030 / JCM 1464 / CCM 169 / CCUG 5858 / IAM 1056 / NBRC 3333 / NCIMB 9278 / NCTC 2665 / VKM Ac-2230) (Micrococcus lysodeikticus), this protein is D-aminoacyl-tRNA deacylase.